The primary structure comprises 348 residues: Histidinol-phosphate aminotransferase (348 aa).

The residue at position 207 (lysine 207) is an N6-(pyridoxal phosphate)lysine.

It belongs to the class-II pyridoxal-phosphate-dependent aminotransferase family. Histidinol-phosphate aminotransferase subfamily. As to quaternary structure, homodimer. It depends on pyridoxal 5'-phosphate as a cofactor.

It carries out the reaction L-histidinol phosphate + 2-oxoglutarate = 3-(imidazol-4-yl)-2-oxopropyl phosphate + L-glutamate. The protein operates within amino-acid biosynthesis; L-histidine biosynthesis; L-histidine from 5-phospho-alpha-D-ribose 1-diphosphate: step 7/9. This is Histidinol-phosphate aminotransferase from Crocosphaera subtropica (strain ATCC 51142 / BH68) (Cyanothece sp. (strain ATCC 51142)).